Reading from the N-terminus, the 433-residue chain is Glutamate-1-semialdehyde 2,1-aminomutase (433 aa).

N6-(pyridoxal phosphate)lysine is present on K271.

Belongs to the class-III pyridoxal-phosphate-dependent aminotransferase family. HemL subfamily. Homodimer. Pyridoxal 5'-phosphate serves as cofactor.

The protein resides in the cytoplasm. It carries out the reaction (S)-4-amino-5-oxopentanoate = 5-aminolevulinate. It participates in porphyrin-containing compound metabolism; protoporphyrin-IX biosynthesis; 5-aminolevulinate from L-glutamyl-tRNA(Glu): step 2/2. It functions in the pathway porphyrin-containing compound metabolism; chlorophyll biosynthesis. The protein is Glutamate-1-semialdehyde 2,1-aminomutase of Prochlorococcus marinus (strain AS9601).